Here is a 363-residue protein sequence, read N- to C-terminus: Anhydro-N-acetylmuramic acid kinase (363 aa).

Glycine 10–aspartate 17 serves as a coordination point for ATP.

It belongs to the anhydro-N-acetylmuramic acid kinase family.

The enzyme catalyses 1,6-anhydro-N-acetyl-beta-muramate + ATP + H2O = N-acetyl-D-muramate 6-phosphate + ADP + H(+). It participates in amino-sugar metabolism; 1,6-anhydro-N-acetylmuramate degradation. Its pathway is cell wall biogenesis; peptidoglycan recycling. Its function is as follows. Catalyzes the specific phosphorylation of 1,6-anhydro-N-acetylmuramic acid (anhMurNAc) with the simultaneous cleavage of the 1,6-anhydro ring, generating MurNAc-6-P. Is required for the utilization of anhMurNAc either imported from the medium or derived from its own cell wall murein, and thus plays a role in cell wall recycling. Contributes to intrinsic fosfomycin resistance in P.aeruginosa. This chain is Anhydro-N-acetylmuramic acid kinase, found in Pseudomonas aeruginosa (strain ATCC 15692 / DSM 22644 / CIP 104116 / JCM 14847 / LMG 12228 / 1C / PRS 101 / PAO1).